The sequence spans 174 residues: Crossover junction endodeoxyribonuclease RuvC (174 aa).

Catalysis depends on residues Asp-8, Glu-67, and Asp-139. Mg(2+)-binding residues include Asp-8, Glu-67, and Asp-139.

The protein belongs to the RuvC family. As to quaternary structure, homodimer which binds Holliday junction (HJ) DNA. The HJ becomes 2-fold symmetrical on binding to RuvC with unstacked arms; it has a different conformation from HJ DNA in complex with RuvA. In the full resolvosome a probable DNA-RuvA(4)-RuvB(12)-RuvC(2) complex forms which resolves the HJ. Mg(2+) is required as a cofactor.

Its subcellular location is the cytoplasm. The catalysed reaction is Endonucleolytic cleavage at a junction such as a reciprocal single-stranded crossover between two homologous DNA duplexes (Holliday junction).. Its function is as follows. The RuvA-RuvB-RuvC complex processes Holliday junction (HJ) DNA during genetic recombination and DNA repair. Endonuclease that resolves HJ intermediates. Cleaves cruciform DNA by making single-stranded nicks across the HJ at symmetrical positions within the homologous arms, yielding a 5'-phosphate and a 3'-hydroxyl group; requires a central core of homology in the junction. The consensus cleavage sequence is 5'-(A/T)TT(C/G)-3'. Cleavage occurs on the 3'-side of the TT dinucleotide at the point of strand exchange. HJ branch migration catalyzed by RuvA-RuvB allows RuvC to scan DNA until it finds its consensus sequence, where it cleaves and resolves the cruciform DNA. This is Crossover junction endodeoxyribonuclease RuvC from Pseudomonas putida (strain GB-1).